A 353-amino-acid chain; its full sequence is Keratocan (353 aa).

Positions 1-21 (MMTLKVCPSLLLLFLVHSVWT) are cleaved as a signal peptide. Residues 34–72 (EHWSHYTFECPQECFCPPSFPNALYCDNKGLKEIPAIPA) form the LRRNT domain. 2 cysteine pairs are disulfide-bonded: cysteine 43/cysteine 49 and cysteine 47/cysteine 59. LRR repeat units lie at residues 73 to 94 (RIWY…PFVN), 97 to 118 (HLRW…SGVL), 123 to 143 (RLLY…PLPV), 144 to 165 (GLEQ…VFSN), 168 to 188 (NLTM…QSDT), 194 to 214 (SLMQ…SIPA), 215 to 236 (NTLQ…YFSA), and 239 to 259 (KVTF…PPNG). N-linked (GlcNAc...) (keratan sulfate) asparagine glycosylation occurs at asparagine 94. N-linked (GlcNAc...) asparagine glycosylation is present at asparagine 168. The N-linked (GlcNAc...) (keratan sulfate) asparagine glycan is linked to asparagine 223. Asparagine 261 carries an N-linked (GlcNAc...) (keratan sulfate) asparagine glycan. LRR repeat units lie at residues 264-283 (SILD…PINA) and 284-305 (HLEH…QICP). Asparagine 299 carries N-linked (GlcNAc...) asparagine glycosylation. An intrachain disulfide couples cysteine 304 to cysteine 344.

It belongs to the small leucine-rich proteoglycan (SLRP) family. SLRP class II subfamily. In terms of tissue distribution, cornea.

It localises to the secreted. It is found in the extracellular space. The protein resides in the extracellular matrix. In terms of biological role, plays an important role in generating and maintaining a transparent matrix within the corneal stroma. The protein is Keratocan (KERA) of Coturnix japonica (Japanese quail).